Reading from the N-terminus, the 340-residue chain is Anthranilate phosphoribosyltransferase (340 aa).

5-phospho-alpha-D-ribose 1-diphosphate is bound by residues G80, 83–84 (GD), T88, 90–93 (NIST), 108–116 (KHGNRAMSS), and S120. Residue G80 participates in anthranilate binding. Residue S92 participates in Mg(2+) binding. N111 contacts anthranilate. R166 lines the anthranilate pocket. Mg(2+)-binding residues include D225 and E226.

This sequence belongs to the anthranilate phosphoribosyltransferase family. As to quaternary structure, homodimer. The cofactor is Mg(2+).

It carries out the reaction N-(5-phospho-beta-D-ribosyl)anthranilate + diphosphate = 5-phospho-alpha-D-ribose 1-diphosphate + anthranilate. It participates in amino-acid biosynthesis; L-tryptophan biosynthesis; L-tryptophan from chorismate: step 2/5. Its function is as follows. Catalyzes the transfer of the phosphoribosyl group of 5-phosphorylribose-1-pyrophosphate (PRPP) to anthranilate to yield N-(5'-phosphoribosyl)-anthranilate (PRA). This chain is Anthranilate phosphoribosyltransferase, found in Roseiflexus castenholzii (strain DSM 13941 / HLO8).